We begin with the raw amino-acid sequence, 126 residues long: Large ribosomal subunit protein bL17 (126 aa).

It belongs to the bacterial ribosomal protein bL17 family. As to quaternary structure, part of the 50S ribosomal subunit. Contacts protein L32.

The protein is Large ribosomal subunit protein bL17 of Limosilactobacillus fermentum (strain NBRC 3956 / LMG 18251) (Lactobacillus fermentum).